Consider the following 160-residue polypeptide: Small ribosomal subunit protein uS9 (160 aa).

Belongs to the universal ribosomal protein uS9 family.

In Bradyrhizobium sp. (strain ORS 278), this protein is Small ribosomal subunit protein uS9.